An 81-amino-acid polypeptide reads, in one-letter code: Cysteine-rich and transmembrane domain-containing protein PCC1 (81 aa).

Residues 1–22 are compositionally biased toward polar residues; it reads MNQSAQNYFSVQKPSETSSGPY. The tract at residues 1–34 is disordered; sequence MNQSAQNYFSVQKPSETSSGPYTSPPPIGYPTRD. The helical transmembrane segment at 56-74 threads the bilayer; that stretch reads AIMSCFSTCMECIFCCGVC.

It belongs to the CYSTM1 family. As to expression, expressed at very low levels in seedlings and petioles, and at higher levels in leaves. Also present in phloem sap.

The protein resides in the cell membrane. Modulates resistance against pathogens including oomycetes (e.g. Hyaloperonospora parasitica and Phytophthora brassicae) and fungi (e.g. Phytophthora brassicae). Controls the abscisic acid-mediated (ABA) signaling pathways. Regulator of the flowering time in response to stress (e.g. UV-C). Regulates polar lipid content; promotes phosphatidylinositol (PI) and 18:0 but prevents 18:2 and 18:3 polar lipids accumulation. This chain is Cysteine-rich and transmembrane domain-containing protein PCC1 (PCC1), found in Arabidopsis thaliana (Mouse-ear cress).